We begin with the raw amino-acid sequence, 398 residues long: Riboflavin transporter RfnT (398 aa).

12 helical membrane passes run 13–35 (ILTI…GGLV), 45–67 (LVTL…AAFF), 74–91 (RNAY…GVIA), 95–117 (IFAA…ASYV), 137–156 (ISWV…QLVI), 166–188 (MFAG…LFML), 220–242 (VAAG…IAMV), 252–274 (ALGI…KLIT), 281–300 (ITAL…LGGF), 305–324 (FWGA…IGAT), 345–367 (FIMF…SSGW), and 372–389 (WLVF…ILRL).

Belongs to the major facilitator superfamily.

It is found in the cell membrane. Functionally, transports riboflavin into the cell. This Brucella anthropi (strain ATCC 49188 / DSM 6882 / CCUG 24695 / JCM 21032 / LMG 3331 / NBRC 15819 / NCTC 12168 / Alc 37) (Ochrobactrum anthropi) protein is Riboflavin transporter RfnT.